The chain runs to 894 residues: Mitogen-activated protein kinase kinase kinase kinase 3 (894 aa).

An N-acetylmethionine modification is found at Met1. The Protein kinase domain occupies 16-273 (FELIQRIGSG…AEKLLQHPFV (258 aa)). Residues 22–30 (IGSGTYGDV), Lys45, and Lys48 contribute to the ATP site. Asp136 serves as the catalytic Proton acceptor. 2 positions are modified to phosphoserine: Ser329 and Ser398. Residues 410–536 (AHLEDDEGDD…DVPKPISNGL (127 aa)) form a disordered region. Residues 473–487 (QVPPRPPPPRLPPHK) show a composition bias toward pro residues. A compositionally biased stretch (basic and acidic residues) spans 513–529 (NEHRGTNLSRKEKKDVP). In terms of domain architecture, CNH spans 556 to 867 (PLKIHCASSW…IFRLLGSDRV (312 aa)).

Belongs to the protein kinase superfamily. STE Ser/Thr protein kinase family. STE20 subfamily. In terms of assembly, interacts with SH3GL2. Interaction appears to regulate MAP4K3-mediated JNK activation. The cofactor is Mg(2+). As to expression, ubiquitously expressed in all tissues examined, with high levels in heart, brain, placenta, skeletal muscle, kidney and pancreas and lower levels in lung and liver.

The catalysed reaction is L-seryl-[protein] + ATP = O-phospho-L-seryl-[protein] + ADP + H(+). It carries out the reaction L-threonyl-[protein] + ATP = O-phospho-L-threonyl-[protein] + ADP + H(+). Its function is as follows. Serine/threonine kinase that plays a role in the response to environmental stress. Appears to act upstream of the JUN N-terminal pathway. Activator of the Hippo signaling pathway which plays a pivotal role in organ size control and tumor suppression by restricting proliferation and promoting apoptosis. MAP4Ks act in parallel to and are partially redundant with STK3/MST2 and STK4/MST2 in the phosphorylation and activation of LATS1/2, and establish MAP4Ks as components of the expanded Hippo pathway. This chain is Mitogen-activated protein kinase kinase kinase kinase 3, found in Homo sapiens (Human).